The chain runs to 168 residues: Ribosome maturation factor RimM (168 aa).

The region spanning 96–168 is the PRC barrel domain; the sequence is EDEYFITDLI…VMIVRLLEGL (73 aa).

This sequence belongs to the RimM family. In terms of assembly, binds ribosomal protein uS19.

It is found in the cytoplasm. Its function is as follows. An accessory protein needed during the final step in the assembly of 30S ribosomal subunit, possibly for assembly of the head region. Essential for efficient processing of 16S rRNA. May be needed both before and after RbfA during the maturation of 16S rRNA. It has affinity for free ribosomal 30S subunits but not for 70S ribosomes. The polypeptide is Ribosome maturation factor RimM (Caldanaerobacter subterraneus subsp. tengcongensis (strain DSM 15242 / JCM 11007 / NBRC 100824 / MB4) (Thermoanaerobacter tengcongensis)).